The primary structure comprises 339 residues: GATA transcription factor 5 (339 aa).

Disordered stretches follow at residues 68–88 (MVRV…RSSD), 126–145 (EYSG…WLTG), 163–206 (PVPA…PSSP), and 221–242 (ERPP…SGEL). Polar residues predominate over residues 126–136 (EYSGPNLTGTP). The Nuclear localization signal signature appears at 167-174 (KARSKRNR). The span at 181–206 (SLGSSSSSGPSSSGSTSSSSSGPSSP) shows a compositional bias: low complexity. The GATA-type zinc-finger motif lies at 245–299 (LQPQRKCSHCGVQKTPQWRAGPMGAKTLCNACGVRYKSGRLLPEYRPACSPTFSS). The disordered stretch occupies residues 314–339 (RKKEPTSDNETGLNQLVQSPQAVPSF). Positions 321-339 (DNETGLNQLVQSPQAVPSF) are enriched in polar residues.

It belongs to the type IV zinc-finger family. Class A subfamily.

The protein localises to the nucleus. In terms of biological role, transcriptional activator that specifically binds 5'-GATA-3' or 5'-GAT-3' motifs within gene promoters. May be involved in the regulation of some light-responsive genes. The sequence is that of GATA transcription factor 5 (GATA5) from Arabidopsis thaliana (Mouse-ear cress).